Here is a 682-residue protein sequence, read N- to C-terminus: MPGFLVRILPLLLPLLLLGPTRGLRNATRRVFEIAYSQDRFLKDGQPFRYISGSIHYSRVPRFYWKDRLLKMKMAGLNTIQTYVPWNFHEPWPGQYQFSEDHDVEYFLRLAHELGLLVILRPGPYICAEWEMGGLPAWLLEKEAILLRSSDPDYLAAVDKWLGVLLPKMKPLLYQNGGPIITVQVENEYGSYFACDFDYLRFLQKRFHHHLGDDVVLFTTDGAHETFLQCGALQGLYTTVDFGPGSNITDAFQIQRKCEPKGPLINSEFYTGWLDHWGQPHSTIKTEVVASSLYDILARGASVNLYMFIGGTNFAYWNGANSPYAAQPTSYDYDAPLSEAGDLTEKYFALRNVIQKFEKVPEGPIPPSTPKFAYGKVSLEKLKTVGAALDILCPSGPIKSLYPLTFIQVKQYYGFVLYRTTLPQDCSNSTPLSSPFNGVHDRAYVAVDGIPQGVLERNRVITLNITGKTGATLDLLVENMGRVNYGAYINDFKGLVSNLTLDSNILTGWTIFPLDTEDAVRSHLGGWEHRDSGRHDEAWAHSSSNYTLPAFYVGNFSIPSGIPDLPQDTFIQFPGWTKGQVWINGFNLGRYWPARGPQLTLFVPQHILMTSAPNTITVLELERAPCSSDGPELCAVEFVDRPVIGSSQIYDHLSKPVEQRLMAPPPKKTKIRGWSMYDDESL.

Residues 1–23 (MPGFLVRILPLLLPLLLLGPTRG) form the signal peptide. A propeptide spanning residues 24–28 (LRNAT) is cleaved from the precursor. An N-linked (GlcNAc...) asparagine glycan is attached at Asn-26. Residues Tyr-83, Glu-129, and Asn-187 each coordinate substrate. The Proton donor role is filled by Glu-188. Residues Cys-195 and Cys-230 are joined by a disulfide bond. Residue Asn-247 is glycosylated (N-linked (GlcNAc...) asparagine). Glu-268 (nucleophile) is an active-site residue. Tyr-333 contributes to the substrate binding site. N-linked (GlcNAc...) asparagine glycans are attached at residues Asn-464, Asn-498, Asn-545, and Asn-555. Cys-626 and Cys-634 form a disulfide bridge.

The protein belongs to the glycosyl hydrolase 35 family. Homodimer. May form higher multimers.

The protein localises to the lysosome. It catalyses the reaction Hydrolysis of terminal non-reducing beta-D-galactose residues in beta-D-galactosides.. In terms of biological role, cleaves beta-linked terminal galactosyl residues from gangliosides, glycoproteins, and glycosaminoglycans. In Macaca fascicularis (Crab-eating macaque), this protein is Beta-galactosidase (GLB1).